Reading from the N-terminus, the 178-residue chain is Large ribosomal subunit protein bL25 (178 aa).

Belongs to the bacterial ribosomal protein bL25 family. CTC subfamily. Part of the 50S ribosomal subunit; part of the 5S rRNA/L5/L18/L25 subcomplex. Contacts the 5S rRNA. Binds to the 5S rRNA independently of L5 and L18.

In terms of biological role, this is one of the proteins that binds to the 5S RNA in the ribosome where it forms part of the central protuberance. This is Large ribosomal subunit protein bL25 from Nitratiruptor sp. (strain SB155-2).